The sequence spans 267 residues: tRNA pseudouridine synthase A (267 aa).

Catalysis depends on Asp55, which acts as the Nucleophile. Residue Tyr111 coordinates substrate.

It belongs to the tRNA pseudouridine synthase TruA family.

The enzyme catalyses uridine(38/39/40) in tRNA = pseudouridine(38/39/40) in tRNA. In terms of biological role, formation of pseudouridine at positions 38, 39 and 40 in the anticodon stem and loop of transfer RNAs. In Thermococcus onnurineus (strain NA1), this protein is tRNA pseudouridine synthase A.